The following is a 3289-amino-acid chain: tRNA nuclease CdiA (3289 aa).

An N-terminal signal peptide occupies residues 1-32 (MHQPPVRFTYRLLSYLISTIIAGQPLLPAVGA). The tract at residues 36–322 (PQNGAGMDKA…AGGNLSVSSR (287 aa)) is two-partner system transport domain (TPS). The interval 351–1398 (EKLTAGRDVT…IVVRTGHLLN (1048 aa)) is FHA-1. The tract at residues 595–615 (AVNASEKLTHSGKSSAPSLSL) is disordered. The interval 1399–1689 (QREGFSATTT…LTGQTGISDD (291 aa)) is receptor binding domain (RBD). The YP domain stretch occupies residues 1690 to 1874 (WPLPSGNNGY…LSPEDITLHN (185 aa)). Residues 1875-1935 (GSVISGNNVQ…DLSAIGDISN (61 aa)) are periplasmic FHA-1 repeat (pFR). The FHA-2 stretch occupies residues 1979-2653 (TDTGPVATIK…TSKYDSKQTS (675 aa)). Over residues 2097–2113 (RESKNSRNGRSESHESH) the composition is skewed to basic and acidic residues. Disordered regions lie at residues 2097 to 2116 (RESK…HAAV), 2332 to 2356 (GSSK…TIGS), and 2466 to 2513 (TGDP…TGKN). 2 stretches are compositionally biased toward polar residues: residues 2344–2356 (GTTQ…TIGS) and 2472–2507 (TGVS…NLSV). Residues 2992–3034 (SDLSEEQKQTISTLATVSAGLAGGLTGNSTASAAVGAQSGKNA) are pretoxin (PT) domain. The short motif at 3035 to 3038 (VENN) is the VENN CT cleavage motif element. The tract at residues 3035-3289 (VENNYLSVSE…VGHIQPVKVK (255 aa)) is C-terminal effector domain (CT); has tRNase activity. The interval 3039–3197 (YLSVSEKTEL…PLIGQAASNK (159 aa)) is inner membrane translocation domain (IMTD), targets protein to PtsG.

The protein in the N-terminal section; belongs to the CdiA toxin family. Forms a contact-dependent growth inhibition complex of CdiA-CT-NC101, CdiI-NC101 and EF-Tu; the complex is a dimer of heterotrimers. Stable CdiA-CT-NC101, EF-Tu complexes are not detected, nor are complexes with EF-Ts.

Its subcellular location is the secreted. It is found in the target cell. The protein resides in the target cell cytoplasm. Functionally, toxic component of a toxin-immunity protein module, which functions as a cellular contact-dependent growth inhibition (CDI) system. CDI modules allow bacteria to communicate with and inhibit the growth of closely related neighboring bacteria in a contact-dependent fashion (target cell counts decrease about 10,0000-fold for this system). CdiA toxicity is neutralized by its cognate immunity protein CdiI-NC101, but not by CdiI from other bacteria. The C-terminal domain (CT) cleaves tRNA endonucleolytically at the 5' side of guanine discriminator nucleotide sites (removes the last 4 nucleotides of the tRNA acceptor arm when the first nucleotide to be removed is G). Requires EF-Ts (tsf) for toxic function of the CT domain in vivo. In vitro the CT tRNase activity requires both EF-Tu (tufA) and EF-Ts. EF-Ts probably increases steady-state GTP-EF-Tu-aa-tRNA substrate levels. The CT domain is thought to remodel this same complex to displace the 3'-end of the aa-tRNA and allow it to enter into the toxin active site. The CT domain gains access to the cytoplasm of target cells by using integral inner membrane protein PTS system glucose-specific EIICB component (ptsG). In terms of biological role, the CdiA protein is thought to be exported from the cell through the central lumen of CdiB, the other half of its two-partner system (TPS). The TPS domain probably remains associated with CdiB while the FHA-1 domain forms an extended filament with the receptor-binding domain (RBD) at its extremity; in the secretion arrested state the C-terminus of the RBD and YP domains form a hairpin-like structure as the FHA-2, PT and CT domains are periplasmic. The YP domain is probably responsible for this arrest at the point where it re-enters the host cell periplasm. Upon binding to a target cell outer membrane receptor a signal is transmitted to activate secretion. The filament elongates slightly, the rest of CdiA is secreted and the FHA-2 domain becomes stably associated with the target cell's outer membrane where it facilitates entry of the toxic CT domain into the target cell periplasm. From there the toxic CT domain is cleaved and gains access to the target cell cytoplasm via an inner membrane protein (PtsG for this CDI). This chain is tRNA nuclease CdiA, found in Escherichia coli (strain NC101).